The following is a 171-amino-acid chain: uncharacterized protein (171 aa).

This sequence belongs to the mimivirus R24/R907 family.

This is an uncharacterized protein from Acanthamoeba polyphaga (Amoeba).